A 198-amino-acid chain; its full sequence is Ribonuclease 3-like protein 1 (198 aa).

The segment covering 85-110 has biased composition (basic and acidic residues); it reads KKLAPKPDEEHTTTTKPISKDDESKT. The segment at 85 to 115 is disordered; it reads KKLAPKPDEEHTTTTKPISKDDESKTRRGSA. A DRBM domain is found at 114–191; that stretch reads SAKSVLHEMC…AEGALWYLEH (78 aa).

This is Ribonuclease 3-like protein 1 (RTL1) from Arabidopsis thaliana (Mouse-ear cress).